A 104-amino-acid polypeptide reads, in one-letter code: uncharacterized protein (104 aa).

Disordered stretches follow at residues 1 to 20 and 83 to 104; these read MTETSTAKVATTKKSTTTRK and TASASSSGKKVVASKKKVVAKK. The span at 83-93 shows a compositional bias: low complexity; it reads TASASSSGKKV. Residues 94 to 104 are compositionally biased toward basic residues; that stretch reads VASKKKVVAKK.

This is an uncharacterized protein from Dictyostelium discoideum (Social amoeba).